Here is a 211-residue protein sequence, read N- to C-terminus: Thiamine-phosphate synthase (211 aa).

4-amino-2-methyl-5-(diphosphooxymethyl)pyrimidine is bound by residues 37-41 and Asn69; that span reads QLRIK. Mg(2+)-binding residues include Asp70 and Asp89. Ser108 is a binding site for 4-amino-2-methyl-5-(diphosphooxymethyl)pyrimidine. Residue 134–136 coordinates 2-[(2R,5Z)-2-carboxy-4-methylthiazol-5(2H)-ylidene]ethyl phosphate; that stretch reads TQT. Lys137 contacts 4-amino-2-methyl-5-(diphosphooxymethyl)pyrimidine. Residues Gly166 and 186–187 contribute to the 2-[(2R,5Z)-2-carboxy-4-methylthiazol-5(2H)-ylidene]ethyl phosphate site; that span reads VS.

Belongs to the thiamine-phosphate synthase family. It depends on Mg(2+) as a cofactor.

It catalyses the reaction 2-[(2R,5Z)-2-carboxy-4-methylthiazol-5(2H)-ylidene]ethyl phosphate + 4-amino-2-methyl-5-(diphosphooxymethyl)pyrimidine + 2 H(+) = thiamine phosphate + CO2 + diphosphate. The enzyme catalyses 2-(2-carboxy-4-methylthiazol-5-yl)ethyl phosphate + 4-amino-2-methyl-5-(diphosphooxymethyl)pyrimidine + 2 H(+) = thiamine phosphate + CO2 + diphosphate. The catalysed reaction is 4-methyl-5-(2-phosphooxyethyl)-thiazole + 4-amino-2-methyl-5-(diphosphooxymethyl)pyrimidine + H(+) = thiamine phosphate + diphosphate. It functions in the pathway cofactor biosynthesis; thiamine diphosphate biosynthesis; thiamine phosphate from 4-amino-2-methyl-5-diphosphomethylpyrimidine and 4-methyl-5-(2-phosphoethyl)-thiazole: step 1/1. Condenses 4-methyl-5-(beta-hydroxyethyl)thiazole monophosphate (THZ-P) and 2-methyl-4-amino-5-hydroxymethyl pyrimidine pyrophosphate (HMP-PP) to form thiamine monophosphate (TMP). The chain is Thiamine-phosphate synthase from Salmonella dublin (strain CT_02021853).